A 473-amino-acid polypeptide reads, in one-letter code: Putative tyrosine recombinase XerC (473 aa).

The 79-residue stretch at 4–82 folds into the Core-binding (CB) domain; the sequence is MTLPELTQEY…HLRTVYRYAM (79 aa). The Tyr recombinase domain occupies 118 to 305; that stretch reads RNWLRFLVQE…DYDLMREVMN (188 aa). Active-site residues include arginine 156, lysine 183, histidine 256, arginine 259, and histidine 283. Catalysis depends on tyrosine 292, which acts as the O-(3'-phospho-DNA)-tyrosine intermediate. Positions 341–352 are enriched in polar residues; sequence SGTELQPATTES. A disordered region spans residues 341-365; that stretch reads SGTELQPATTESSEAKKADDTASNP.

It belongs to the 'phage' integrase family.

The protein localises to the cytoplasm. In terms of biological role, site-specific tyrosine recombinase, which acts by catalyzing the cutting and rejoining of the recombining DNA molecules. The chain is Putative tyrosine recombinase XerC from Pseudomonas syringae.